The sequence spans 337 residues: Eukaryotic translation initiation factor 3 subunit H (337 aa).

An MPN domain is found at 25-158 (VQIEGLAVLK…LKALKLSDSF (134 aa)). Ser-178 bears the Phosphoserine; by ATPK1 mark. Basic and acidic residues predominate over residues 267-278 (RRTENMARKSAG). The tract at residues 267–290 (RRTENMARKSAGEEPLPEEDPSNP) is disordered.

It belongs to the eIF-3 subunit H family. As to quaternary structure, component of the eukaryotic translation initiation factor 3 (eIF-3) complex. Interacts directly with TIF3A1, TIF3B1, TIF3C1, TIF3E1 and TIF3F1. Associates with the CSN (COP9 signalosome) complex. Binds to CSN1, CSN7 and CSN8. Interacts with ATPK1. Post-translationally, in response to auxin (NAA), phosphorylated at Ser-178 by ATPK1 and binds to polysomes via TOR signaling. This phosphorylation is repressed by Torin-1. Mostly expressed in roots and flowers, and, to a lower extent, in leaves, stems and siliques.

It is found in the cytoplasm. In terms of biological role, component of the eukaryotic translation initiation factor 3 (eIF-3) complex, which is involved in protein synthesis of a specialized repertoire of mRNAs and, together with other initiation factors, stimulates binding of mRNA and methionyl-tRNAi to the 40S ribosome. The eIF-3 complex specifically targets and initiates translation of a subset of mRNAs involved in cell proliferation (Potential). Regulates translation initiation of specific 5' mRNAs harboring multiple upstream open reading frames (uORFs) in their 5' leader sequence (e.g. BETA-OHASE 2 and LHY). This is Eukaryotic translation initiation factor 3 subunit H (TIF3H1) from Arabidopsis thaliana (Mouse-ear cress).